Consider the following 509-residue polypeptide: 2,3-bisphosphoglycerate-independent phosphoglycerate mutase (509 aa).

Aspartate 12 and serine 62 together coordinate Mn(2+). Serine 62 functions as the Phosphoserine intermediate in the catalytic mechanism. Substrate-binding positions include histidine 123, 153 to 154 (RD), arginine 185, arginine 191, 260 to 263 (RPDR), and lysine 333. Mn(2+) is bound by residues aspartate 400, histidine 404, aspartate 441, histidine 442, and histidine 460.

It belongs to the BPG-independent phosphoglycerate mutase family. As to quaternary structure, monomer. The cofactor is Mn(2+).

The enzyme catalyses (2R)-2-phosphoglycerate = (2R)-3-phosphoglycerate. The protein operates within carbohydrate degradation; glycolysis; pyruvate from D-glyceraldehyde 3-phosphate: step 3/5. Its function is as follows. Catalyzes the interconversion of 2-phosphoglycerate and 3-phosphoglycerate. This Clostridium botulinum (strain Langeland / NCTC 10281 / Type F) protein is 2,3-bisphosphoglycerate-independent phosphoglycerate mutase.